The following is a 389-amino-acid chain: Succinate--CoA ligase [ADP-forming] subunit beta (389 aa).

The ATP-grasp domain occupies 9 to 244 (KQLFADYGLP…PSQEDERERR (236 aa)). Residues lysine 46, 53 to 55 (GRG), glutamate 99, threonine 102, and glutamate 107 contribute to the ATP site. Asparagine 199 and aspartate 213 together coordinate Mg(2+). Residues asparagine 264 and 321-323 (GIV) each bind substrate.

The protein belongs to the succinate/malate CoA ligase beta subunit family. Heterotetramer of two alpha and two beta subunits. Mg(2+) serves as cofactor.

It carries out the reaction succinate + ATP + CoA = succinyl-CoA + ADP + phosphate. The enzyme catalyses GTP + succinate + CoA = succinyl-CoA + GDP + phosphate. It participates in carbohydrate metabolism; tricarboxylic acid cycle; succinate from succinyl-CoA (ligase route): step 1/1. Functionally, succinyl-CoA synthetase functions in the citric acid cycle (TCA), coupling the hydrolysis of succinyl-CoA to the synthesis of either ATP or GTP and thus represents the only step of substrate-level phosphorylation in the TCA. The beta subunit provides nucleotide specificity of the enzyme and binds the substrate succinate, while the binding sites for coenzyme A and phosphate are found in the alpha subunit. This chain is Succinate--CoA ligase [ADP-forming] subunit beta, found in Alcanivorax borkumensis (strain ATCC 700651 / DSM 11573 / NCIMB 13689 / SK2).